Here is a 464-residue protein sequence, read N- to C-terminus: Aspartyl protease 37 (464 aa).

Residues 1 to 19 (MNAAVLLLLLALAALPASC) form the signal peptide. Residue Asn-41 is glycosylated (N-linked (GlcNAc...) asparagine). The region spanning 89 to 456 (YLVKLGIGTP…NLRRGRVTFV (368 aa)) is the Peptidase A1 domain. The active site involves Asp-107. Cys-117 and Cys-123 are joined by a disulfide. 2 N-linked (GlcNAc...) asparagine glycosylation sites follow: Asn-174 and Asn-261. Residues 299–311 (TTTTTATATATAP) are compositionally biased toward low complexity. Residues 299–319 (TTTTTATATATAPAPAPTPSP) form a disordered region. Asn-320 is a glycosylation site (N-linked (GlcNAc...) asparagine). Asp-337 is a catalytic residue. The cysteines at positions 376 and 420 are disulfide-linked.

This sequence belongs to the peptidase A1 family.

Functionally, anther-specific aspartic protease involved in tapetal programmed cell death (PCD). Directly regulated by the transcription factor EAT1/DTD in anthers during tapetum PCD and degeneration. The protein is Aspartyl protease 37 of Oryza sativa subsp. japonica (Rice).